The following is a 465-amino-acid chain: Ribulose bisphosphate carboxylase large chain (465 aa).

Residue K4 is modified to N6,N6,N6-trimethyllysine. The substrate site is built by N113 and T163. Catalysis depends on K165, which acts as the Proton acceptor. Position 167 (K167) interacts with substrate. Positions 191, 193, and 194 each coordinate Mg(2+). Residue K191 is modified to N6-carboxylysine. The Proton acceptor role is filled by H284. Positions 285, 317, and 369 each coordinate substrate.

It belongs to the RuBisCO large chain family. Type I subfamily. As to quaternary structure, heterohexadecamer of 8 large chains and 8 small chains; disulfide-linked. The disulfide link is formed within the large subunit homodimers. Mg(2+) serves as cofactor. The disulfide bond which can form in the large chain dimeric partners within the hexadecamer appears to be associated with oxidative stress and protein turnover.

It localises to the plastid. Its subcellular location is the chloroplast. It carries out the reaction 2 (2R)-3-phosphoglycerate + 2 H(+) = D-ribulose 1,5-bisphosphate + CO2 + H2O. The catalysed reaction is D-ribulose 1,5-bisphosphate + O2 = 2-phosphoglycolate + (2R)-3-phosphoglycerate + 2 H(+). In terms of biological role, ruBisCO catalyzes two reactions: the carboxylation of D-ribulose 1,5-bisphosphate, the primary event in carbon dioxide fixation, as well as the oxidative fragmentation of the pentose substrate in the photorespiration process. Both reactions occur simultaneously and in competition at the same active site. The polypeptide is Ribulose bisphosphate carboxylase large chain (Cornus oblonga).